The primary structure comprises 98 residues: La1-like protein 13 (98 aa).

Residues 1–24 form the signal peptide; that stretch reads MERILKPVFLAILIVLSFSSQCMG. Lys97 bears the Lysine amide mark.

It belongs to the scorpion La1-like peptide family. Post-translationally, contains 4 disulfide bonds. As to expression, expressed by the venom gland.

Its subcellular location is the secreted. This is La1-like protein 13 from Urodacus yaschenkoi (Inland robust scorpion).